We begin with the raw amino-acid sequence, 276 residues long: Rhomboid protease GlpG (276 aa).

The next 6 membrane-spanning stretches (helical) occupy residues 94–114 (GPVT…MSLI), 142–162 (IFMH…WYLG), 169–189 (LGSG…GYVQ), 192–212 (FSGP…GYVW), 229–249 (LIIF…GMSM), and 250–270 (ANGA…VDTL). Catalysis depends on Ser201, which acts as the Nucleophile. His254 is an active-site residue.

Belongs to the peptidase S54 family.

It localises to the cell inner membrane. The catalysed reaction is Cleaves type-1 transmembrane domains using a catalytic dyad composed of serine and histidine that are contributed by different transmembrane domains.. Rhomboid-type serine protease that catalyzes intramembrane proteolysis. This Salmonella typhi protein is Rhomboid protease GlpG.